The primary structure comprises 696 residues: Catalase (696 aa).

Active-site residues include His-64 and Asn-137. The segment at 187–211 (SLAQGSQISSERGSPKAYSNTEPNK) is disordered. The span at 189–208 (AQGSQISSERGSPKAYSNTE) shows a compositional bias: polar residues. Residue Tyr-353 participates in heme binding.

Belongs to the catalase family. Heme is required as a cofactor.

The catalysed reaction is 2 H2O2 = O2 + 2 H2O. Occurs in almost all aerobically respiring organisms and serves to protect cells from the toxic effects of hydrogen peroxide. In Penicillium janthinellum (Penicillium vitale), this protein is Catalase.